The primary structure comprises 218 residues: Albicidin resistance protein (218 aa).

It localises to the periplasm. Albicidin resistance protein binds to form a complex without antibiotic activity but without catalyzing any further chemical modifications to albicidin. This Klebsiella oxytoca protein is Albicidin resistance protein.